The chain runs to 618 residues: MSARPQADFDGKAFAARLSTAPGVYRMYAADDSLLYVGKAGALRKRVGSYFNGTPKNARLTSMLSQVARMDVTVTRSEAEALLLENQLIKSLSPRYNVSLRDDKSYPYVLLTREDWPRIALHRGPRAVNGRYFGPYAGVTAVRETLNLMHKLFKLRSCEDSVFRNRSRPCLQYQIGRCSAPCVDLVAAQDYQEAVRRATMFLEGKSDQLGEEIMHSMQQASEALEFERAARLRDLLSSLRSMQNRQYVDGRAADLDVLACATQSSQACVLLLSFRDGRNLGTRSFFPKTNGEDSAEEILAAFVSQYYAEHAPPREILLDRAIPDAELIEAALSAAAEHKVALKWNVRGERAGYLLLASRNAQLTLVTELTSQSAQHARSEALREMLGLAEQVKRVECFDISHTMGEATVASCVVFDASGPVRGQYRRFNISGITPGDDYAAMRQAIERRFRRAVEENGVLPDVLLIDGGAGQLAQAQAALADLGIENVLLVGVAKGEERRAGHEALILADGRELRPGAASPALQFIQQVRDEAHRFAITGHRGRRQKARMTSKLEDIPGIGPRRRASLLKHFGGLVGLKAAGEAEIARVEGVNAALAARIYANLHGLALPDAAGESSP.

One can recognise a GIY-YIG domain in the interval 20 to 98 (TAPGVYRMYA…IKSLSPRYNV (79 aa)). The 36-residue stretch at 207–242 (DQLGEEIMHSMQQASEALEFERAARLRDLLSSLRSM) folds into the UVR domain.

This sequence belongs to the UvrC family. In terms of assembly, interacts with UvrB in an incision complex.

It localises to the cytoplasm. Functionally, the UvrABC repair system catalyzes the recognition and processing of DNA lesions. UvrC both incises the 5' and 3' sides of the lesion. The N-terminal half is responsible for the 3' incision and the C-terminal half is responsible for the 5' incision. The chain is UvrABC system protein C from Xanthomonas campestris pv. campestris (strain B100).